The sequence spans 455 residues: Chromosomal replication initiator protein DnaA (455 aa).

A domain I, interacts with DnaA modulators region spans residues 1–74; the sequence is MFDIEKFWQH…IQSAYGYAGI (74 aa). The interval 74 to 117 is domain II; the sequence is IEILPVFQINENNDSPERIVTPEPRYAIQLQQEKRAHKQFTKNL. The tract at residues 118–334 is domain III, AAA+ region; that stretch reads KLNEKYTFDN…GALVKVQAYA (217 aa). The ATP site is built by Gly-162, Gly-164, Lys-165, and Thr-166. The tract at residues 335-455 is domain IV, binds dsDNA; that stretch reads TIERADINVN…VFDLKQMIEH (121 aa).

The protein belongs to the DnaA family. In terms of assembly, oligomerizes as a right-handed, spiral filament on DNA at oriC.

Its subcellular location is the cytoplasm. Functionally, plays an essential role in the initiation and regulation of chromosomal replication. ATP-DnaA binds to the origin of replication (oriC) to initiate formation of the DNA replication initiation complex once per cell cycle. Binds the DnaA box (a 9 base pair repeat at the origin) and separates the double-stranded (ds)DNA. Forms a right-handed helical filament on oriC DNA; dsDNA binds to the exterior of the filament while single-stranded (ss)DNA is stabiized in the filament's interior. The ATP-DnaA-oriC complex binds and stabilizes one strand of the AT-rich DNA unwinding element (DUE), permitting loading of DNA polymerase. After initiation quickly degrades to an ADP-DnaA complex that is not apt for DNA replication. Binds acidic phospholipids. In Lactobacillus helveticus (strain DPC 4571), this protein is Chromosomal replication initiator protein DnaA.